The chain runs to 350 residues: Alcohol dehydrogenase (350 aa).

Cys46 contributes to the Zn(2+) binding site. NAD(+) contacts are provided by His47, Thr48, and His51. His69, Cys100, Cys103, Cys106, Cys114, and Cys156 together coordinate Zn(2+). 4 residues coordinate NAD(+): Gly183, Gly184, Leu185, and Asp204. A Phosphothreonine modification is found at Thr205. Lys209 and Phe224 together coordinate NAD(+). At Thr250 the chain carries Phosphothreonine. The NAD(+) site is built by Val271, Met273, Ser296, Val298, and Arg343.

Belongs to the zinc-containing alcohol dehydrogenase family. In terms of assembly, homotetramer. Requires Zn(2+) as cofactor.

The protein resides in the cytoplasm. It carries out the reaction a primary alcohol + NAD(+) = an aldehyde + NADH + H(+). The enzyme catalyses a secondary alcohol + NAD(+) = a ketone + NADH + H(+). It catalyses the reaction ethanol + NAD(+) = acetaldehyde + NADH + H(+). Its function is as follows. Reduces acetaldehyde to ethanol during the fermentation of glucose. The chain is Alcohol dehydrogenase (adh1) from Schizosaccharomyces pombe (strain 972 / ATCC 24843) (Fission yeast).